The following is a 336-amino-acid chain: Abasic site processing protein HMCES (336 aa).

The active-site Nucleophile is C2. C2 carries the post-translational modification Thiazolidine linkage to a ring-opened DNA abasic site. The interval 26-51 is disordered; the sequence is RQKCPKWRDGDTDKYQPSYNKSPQSN. Residues 40 to 51 are compositionally biased toward polar residues; the sequence is YQPSYNKSPQSN. E129 is a catalytic residue. A disordered region spans residues 285–336; it reads QNKSPKKEESRSIIQSPKLSQFGAPPKKTSAGLMQQWLKKEDGEPSPKRAKK. Positions 322 to 336 are enriched in basic and acidic residues; it reads LKKEDGEPSPKRAKK.

Belongs to the SOS response-associated peptidase family. Ubiquitination of the hmces DNA-protein cross-link by rfwd3 may promotes its degradation.

It is found in the chromosome. With respect to regulation, formation and reversal of DNA-protein cross-link depends on DNA context. Catalyzes formation of the thiazolidine linkage in presence of abasic sites in single-stranded DNA. Mediates the reversal of the thiazolidine cross-link in presence of double stranded DNA. Sensor of abasic sites in single-stranded DNA (ssDNA) required to preserve genome integrity by promoting error-free repair of abasic sites. Acts as an enzyme that recognizes and binds abasic sites in ssDNA at replication forks and chemically modifies the lesion by forming a covalent cross-link with DNA: forms a stable thiazolidine linkage between a ring-opened abasic site and the alpha-amino and sulfhydryl substituents of its N-terminal catalytic cysteine residue. The hmces DNA-protein cross-link is then either reversed or degraded. Hmces is able to catalyze the reversal of its thiazolidine cross-link and cycle between a cross-link and a non-cross-linked state depending on DNA context: mediates self-reversal of the thiazolidine cross-link in double stranded DNA, allowing apex1 to initiate downstream repair of abasic sites. The hmces DNA-protein cross-link can also be degraded by the sprtn metalloprotease following unfolding by the brip1/fancj helicase. Promotes error-free repair of abasic sites by protecting abasic sites from translesion synthesis (TLS) polymerases and endonucleases that are error-prone and would generate mutations and double-strand breaks. Acts as a protease: mediates autocatalytic processing of its N-terminal methionine in order to expose the catalytic cysteine. The HMCES DNA-protein cross-link is then either reversed or degraded. According to a model, the HMCES DNA-protein cross-link. This chain is Abasic site processing protein HMCES, found in Xenopus laevis (African clawed frog).